A 932-amino-acid polypeptide reads, in one-letter code: Protein translocase subunit SecA (932 aa).

ATP-binding positions include Gln87, Gly105–Thr109, and Asp515. Zn(2+)-binding residues include Cys916, Cys918, Cys927, and His928.

This sequence belongs to the SecA family. In terms of assembly, monomer and homodimer. Part of the essential Sec protein translocation apparatus which comprises SecA, SecYEG and auxiliary proteins SecDF-YajC and YidC. Requires Zn(2+) as cofactor.

It localises to the cell inner membrane. The protein resides in the cytoplasm. It carries out the reaction ATP + H2O + cellular proteinSide 1 = ADP + phosphate + cellular proteinSide 2.. Its function is as follows. Part of the Sec protein translocase complex. Interacts with the SecYEG preprotein conducting channel. Has a central role in coupling the hydrolysis of ATP to the transfer of proteins into and across the cell membrane, serving both as a receptor for the preprotein-SecB complex and as an ATP-driven molecular motor driving the stepwise translocation of polypeptide chains across the membrane. This Burkholderia orbicola (strain MC0-3) protein is Protein translocase subunit SecA.